Reading from the N-terminus, the 291-residue chain is Urease accessory protein UreD (291 aa).

This sequence belongs to the UreD family. UreD, UreF and UreG form a complex that acts as a GTP-hydrolysis-dependent molecular chaperone, activating the urease apoprotein by helping to assemble the nickel containing metallocenter of UreC. The UreE protein probably delivers the nickel.

The protein localises to the cytoplasm. Functionally, required for maturation of urease via the functional incorporation of the urease nickel metallocenter. The chain is Urease accessory protein UreD from Polynucleobacter asymbioticus (strain DSM 18221 / CIP 109841 / QLW-P1DMWA-1) (Polynucleobacter necessarius subsp. asymbioticus).